The sequence spans 179 residues: Ribosome maturation factor RimM (179 aa).

One can recognise a PRC barrel domain in the interval 95 to 174; it reads KDEFFYFDIL…QIFCTQDAFL (80 aa).

It belongs to the RimM family. As to quaternary structure, binds ribosomal protein uS19.

It localises to the cytoplasm. Functionally, an accessory protein needed during the final step in the assembly of 30S ribosomal subunit, possibly for assembly of the head region. Essential for efficient processing of 16S rRNA. May be needed both before and after RbfA during the maturation of 16S rRNA. It has affinity for free ribosomal 30S subunits but not for 70S ribosomes. This chain is Ribosome maturation factor RimM, found in Campylobacter jejuni subsp. doylei (strain ATCC BAA-1458 / RM4099 / 269.97).